We begin with the raw amino-acid sequence, 666 residues long: SNARE-interacting protein KEULE (666 aa).

Residues Lys-340 to Leu-377 adopt a coiled-coil conformation. Positions Lys-534–Asp-589 are disordered. The span at Ser-550 to Met-568 shows a compositional bias: low complexity.

The protein belongs to the STXBP/unc-18/SEC1 family. As to quaternary structure, binds the syntaxin KNOLLE. Interacts with SEC6. Expressed throughout the plant, both in mitotically active and quiescent cells. Enriched in dividing tissues.

Its subcellular location is the cytoplasm. It localises to the membrane. The protein resides in the cytoskeleton. It is found in the phragmoplast. Regulator of vesicle trafficking involved in cytokinesis and root hair development, but not required for cell elongation. This Arabidopsis thaliana (Mouse-ear cress) protein is SNARE-interacting protein KEULE (KEU).